A 169-amino-acid polypeptide reads, in one-letter code: S-ribosylhomocysteine lyase (169 aa).

3 residues coordinate Fe cation: His-54, His-58, and Cys-128.

It belongs to the LuxS family. As to quaternary structure, homodimer. It depends on Fe cation as a cofactor.

It catalyses the reaction S-(5-deoxy-D-ribos-5-yl)-L-homocysteine = (S)-4,5-dihydroxypentane-2,3-dione + L-homocysteine. In terms of biological role, involved in the synthesis of autoinducer 2 (AI-2) which is secreted by bacteria and is used to communicate both the cell density and the metabolic potential of the environment. The regulation of gene expression in response to changes in cell density is called quorum sensing. Catalyzes the transformation of S-ribosylhomocysteine (RHC) to homocysteine (HC) and 4,5-dihydroxy-2,3-pentadione (DPD). In Shewanella halifaxensis (strain HAW-EB4), this protein is S-ribosylhomocysteine lyase.